Reading from the N-terminus, the 229-residue chain is Peptidase E (229 aa).

Catalysis depends on charge relay system residues Ser-120, Asp-135, and His-157.

Belongs to the peptidase S51 family.

The protein localises to the cytoplasm. The enzyme catalyses Dipeptidase E catalyzes the hydrolysis of dipeptides Asp-|-Xaa. It does not act on peptides with N-terminal Glu, Asn or Gln, nor does it cleave isoaspartyl peptides.. In terms of biological role, hydrolyzes dipeptides containing N-terminal aspartate residues. May play a role in allowing the cell to use peptide aspartate to spare carbon otherwise required for the synthesis of the aspartate family of amino acids. The sequence is that of Peptidase E from Salmonella paratyphi C (strain RKS4594).